A 105-amino-acid chain; its full sequence is Serine protease inhibitor Kazal-type 8 (105 aa).

The N-terminal stretch at 1–21 (MKVIFSVAVLVLASSVWTSLA) is a signal peptide. 3 disulfides stabilise this stretch: Cys44-Cys78, Cys51-Cys75, and Cys64-Cys96. The region spanning 44-98 (CIKNIQLCWILSYFKVSEPICGSNQVTYEGECHLCSGILYEDRTVIKVHDGPCEH) is the Kazal-like domain.

Expressed in epydiymis, in the cauda, corpus and caput.

It is found in the secreted. Its function is as follows. Probable serine protease inhibitor. The polypeptide is Serine protease inhibitor Kazal-type 8 (Spink8) (Mus musculus (Mouse)).